Consider the following 333-residue polypeptide: Taste receptor type 2 member 38 (333 aa).

Residues 1-17 lie on the Extracellular side of the membrane; sequence MLTLTRICTVSYEVRST. A helical transmembrane segment spans residues 18 to 38; that stretch reads FLFISVLEFAVGFLTNAFIFL. Topologically, residues 39–55 are cytoplasmic; sequence VNFWDVVKRQPLSNSDC. A helical membrane pass occupies residues 56-76; it reads VLLCLSISRLFLHGLLFLSAI. The Extracellular segment spans residues 77 to 94; it reads QLTHFQKLSEPLNHSYHA. Residues 95 to 115 form a helical membrane-spanning segment; sequence IIMLWMIANQANLWLATCLSL. Topologically, residues 116-142 are cytoplasmic; it reads LYCSKLIRSSHTFLICLASWVSRKICQ. Residues 143–163 traverse the membrane as a helical segment; sequence MLLGIILCSCICTVLCVWCYF. Topologically, residues 164 to 190 are extracellular; it reads SRPHFTVTTVLFTNNNTRLNWQIKDLN. Asn178 carries N-linked (GlcNAc...) asparagine glycosylation. Residues 191–211 traverse the membrane as a helical segment; that stretch reads LFYSFLFCYLWSVPPFLLFLV. Residues 212 to 251 are Cytoplasmic-facing; it reads SSGMLTVSLGRHMRTMKVYTRDFRDPSLEAHIKALKSLVS. A helical membrane pass occupies residues 252 to 272; the sequence is FFCFFVISSCAAFISVPLLIL. The Extracellular segment spans residues 273 to 276; it reads WRDK. Residues 277–297 form a helical membrane-spanning segment; the sequence is IGVMVCVGIMAACPSGHAAIL. Residues 298-333 are Cytoplasmic-facing; it reads ISGNAKLRRAVTTILLWAQSSLKVRADHKADSRTLC.

Belongs to the G-protein coupled receptor T2R family.

It is found in the membrane. Receptor that may play a role in the perception of bitterness and is gustducin-linked. May play a role in sensing the chemical composition of the gastrointestinal content. The activity of this receptor may stimulate alpha gustducin, mediate PLC-beta-2 activation and lead to the gating of TRPM5. The chain is Taste receptor type 2 member 38 (TAS2R38) from Hylobates klossii (Kloss's gibbon).